Consider the following 314-residue polypeptide: Ribonuclease Z (314 aa).

7 residues coordinate Zn(2+): H61, H63, D65, H66, H139, D211, and H269. D65 serves as the catalytic Proton acceptor.

Belongs to the RNase Z family. Homodimer. Zn(2+) serves as cofactor.

The enzyme catalyses Endonucleolytic cleavage of RNA, removing extra 3' nucleotides from tRNA precursor, generating 3' termini of tRNAs. A 3'-hydroxy group is left at the tRNA terminus and a 5'-phosphoryl group is left at the trailer molecule.. In terms of biological role, zinc phosphodiesterase, which displays some tRNA 3'-processing endonuclease activity. Probably involved in tRNA maturation, by removing a 3'-trailer from precursor tRNA. This chain is Ribonuclease Z, found in Gemmatimonas aurantiaca (strain DSM 14586 / JCM 11422 / NBRC 100505 / T-27).